A 212-amino-acid polypeptide reads, in one-letter code: uncharacterized protein (212 aa).

A helical membrane pass occupies residues 5–25; it reads IFIILIAVLLIGVNIKKIAAA.

Its subcellular location is the membrane. This is an uncharacterized protein from Borreliella burgdorferi (strain ATCC 35210 / DSM 4680 / CIP 102532 / B31) (Borrelia burgdorferi).